The chain runs to 287 residues: Bifunctional protein FolD (287 aa).

Residues 160–162 (GRS), S189, and T230 each bind NADP(+).

This sequence belongs to the tetrahydrofolate dehydrogenase/cyclohydrolase family. As to quaternary structure, homodimer.

The enzyme catalyses (6R)-5,10-methylene-5,6,7,8-tetrahydrofolate + NADP(+) = (6R)-5,10-methenyltetrahydrofolate + NADPH. It carries out the reaction (6R)-5,10-methenyltetrahydrofolate + H2O = (6R)-10-formyltetrahydrofolate + H(+). It functions in the pathway one-carbon metabolism; tetrahydrofolate interconversion. Catalyzes the oxidation of 5,10-methylenetetrahydrofolate to 5,10-methenyltetrahydrofolate and then the hydrolysis of 5,10-methenyltetrahydrofolate to 10-formyltetrahydrofolate. The polypeptide is Bifunctional protein FolD (Chlamydia abortus (strain DSM 27085 / S26/3) (Chlamydophila abortus)).